A 659-amino-acid chain; its full sequence is Acetyl-coenzyme A synthetase (659 aa).

The segment at 1–35 is disordered; the sequence is MATEQTKGQSSESISSVLSERRKFPPPEAFSSQSH. Residues 205–208, Thr-323, and Asn-347 each bind CoA; that span reads RRGS. Residues 399-401, 423-428, Asp-512, and Arg-527 each bind ATP; these read GEP and DTWWQT. Ser-535 provides a ligand contact to CoA. Arg-538 contributes to the ATP binding site. 3 residues coordinate Mg(2+): Val-549, His-551, and Val-554. Lys-621 is modified (N6-acetyllysine).

It belongs to the ATP-dependent AMP-binding enzyme family. It depends on Mg(2+) as a cofactor. Post-translationally, acetylated. Deacetylation by the SIR2-homolog deacetylase activates the enzyme.

The catalysed reaction is acetate + ATP + CoA = acetyl-CoA + AMP + diphosphate. Catalyzes the conversion of acetate into acetyl-CoA (AcCoA), an essential intermediate at the junction of anabolic and catabolic pathways. AcsA undergoes a two-step reaction. In the first half reaction, AcsA combines acetate with ATP to form acetyl-adenylate (AcAMP) intermediate. In the second half reaction, it can then transfer the acetyl group from AcAMP to the sulfhydryl group of CoA, forming the product AcCoA. The chain is Acetyl-coenzyme A synthetase from Chlorobaculum tepidum (strain ATCC 49652 / DSM 12025 / NBRC 103806 / TLS) (Chlorobium tepidum).